A 191-amino-acid polypeptide reads, in one-letter code: Protein Ves (191 aa).

The protein belongs to the Ves family.

The chain is Protein Ves from Escherichia coli O139:H28 (strain E24377A / ETEC).